Reading from the N-terminus, the 104-residue chain is Large ribosomal subunit protein bL21 (104 aa).

It belongs to the bacterial ribosomal protein bL21 family. As to quaternary structure, part of the 50S ribosomal subunit. Contacts protein L20.

This protein binds to 23S rRNA in the presence of protein L20. The protein is Large ribosomal subunit protein bL21 of Clostridium botulinum (strain ATCC 19397 / Type A).